A 681-amino-acid chain; its full sequence is Dipeptidyl carboxypeptidase (681 aa).

H470 is a binding site for Zn(2+). E471 is an active-site residue. Positions 474 and 477 each coordinate Zn(2+).

Belongs to the peptidase M3 family. Zn(2+) is required as a cofactor.

It localises to the cytoplasm. It catalyses the reaction Hydrolysis of unblocked, C-terminal dipeptides from oligopeptides, with broad specificity. Does not hydrolyze bonds in which P1' is Pro, or both P1 and P1' are Gly.. With respect to regulation, stimulated by Mn(2+), Mg(2+), Co(2+) and Ca(2+), inhibited by Cu(2+), Ni(2+), Zn(2+), chymostatin and 1,10-phenanthroline. Functionally, removes dipeptides from the C-termini of N-blocked tripeptides, tetrapeptides and larger peptides. The polypeptide is Dipeptidyl carboxypeptidase (Escherichia coli (strain K12)).